The primary structure comprises 432 residues: Homogentisate 1,2-dioxygenase (432 aa).

Residue His-287 is the Proton acceptor of the active site. His-330 and Glu-336 together coordinate Fe cation. 2 residues coordinate homogentisate: Tyr-345 and His-366. His-366 lines the Fe cation pocket.

This sequence belongs to the homogentisate dioxygenase family. In terms of assembly, hexamer; dimer of trimers. Fe cation serves as cofactor.

The enzyme catalyses homogentisate + O2 = 4-maleylacetoacetate + H(+). It functions in the pathway amino-acid degradation; L-phenylalanine degradation; acetoacetate and fumarate from L-phenylalanine: step 4/6. Functionally, involved in the catabolism of homogentisate (2,5-dihydroxyphenylacetate or 2,5-OH-PhAc), a central intermediate in the degradation of phenylalanine and tyrosine. Catalyzes the oxidative ring cleavage of the aromatic ring of homogentisate to yield maleylacetoacetate. This chain is Homogentisate 1,2-dioxygenase, found in Pseudomonas aeruginosa (strain UCBPP-PA14).